We begin with the raw amino-acid sequence, 236 residues long: MEASDGQGGEGDKPLEQVTNVSCLETSSSASPARDSLMRHAKGLDQDTFKTCKEYLRPLKKFLRKLHLPRDLPQKKKLKYMKQSLVVLGDHINTFLQHYCQAWEIKHWRKMLWRFISLFSELEAKQLRRLYKYTKSSQPAKFLVTFCASDAPERSLLADREDSLPKLCHAWGLHSNISGMKERLSNMQTPGQGSPLPGQPRSQDHVKKDSLRELSQKPKLKRKRIKEAPETPETEP.

The interval 44-145 (LDQDTFKTCK…SSQPAKFLVT (102 aa)) is CHD1 helical C-terminal domain (CHCT). The segment at 184 to 236 (LSNMQTPGQGSPLPGQPRSQDHVKKDSLRELSQKPKLKRKRIKEAPETPETEP) is disordered. The segment covering 202-216 (SQDHVKKDSLRELSQ) has biased composition (basic and acidic residues).

It localises to the cytoplasm. Its subcellular location is the nucleus. May play a role in regulation of apoptosis. This chain is CHD1 helical C-terminal domain containing protein 1, found in Homo sapiens (Human).